The following is a 389-amino-acid chain: Lipid-A-disaccharide synthase (389 aa).

This sequence belongs to the LpxB family.

It carries out the reaction a lipid X + a UDP-2-N,3-O-bis[(3R)-3-hydroxyacyl]-alpha-D-glucosamine = a lipid A disaccharide + UDP + H(+). The protein operates within bacterial outer membrane biogenesis; LPS lipid A biosynthesis. In terms of biological role, condensation of UDP-2,3-diacylglucosamine and 2,3-diacylglucosamine-1-phosphate to form lipid A disaccharide, a precursor of lipid A, a phosphorylated glycolipid that anchors the lipopolysaccharide to the outer membrane of the cell. This is Lipid-A-disaccharide synthase from Burkholderia orbicola (strain MC0-3).